Consider the following 367-residue polypeptide: Mitochondrial GTPase 1 (367 aa).

A CP-type G domain is found at 42-228 (LKTFEKLLPQ…LIDTPGIGVP (187 aa)). Residues 89–92 (TRKD), 160–165 (NVGKST), and Gly-224 contribute to the GTP site.

It belongs to the TRAFAC class YlqF/YawG GTPase family. MTG1 subfamily.

It is found in the mitochondrion inner membrane. Mitochondrial GTPase involved in assembly of the large ribosomal subunit. Plays a role in expression of the mitochondrial translational machinery. This Saccharomyces cerevisiae (strain ATCC 204508 / S288c) (Baker's yeast) protein is Mitochondrial GTPase 1 (MTG1).